A 213-amino-acid polypeptide reads, in one-letter code: MTTNKSYLTYFTDALWINNQPLIAILGICSALAVTTTVTTALTMGFAVSFVTGCSSFVVSLLRKITPESVRMIAQLIIISLFVILIDQFLKAFFFTISKTLSVFVGLIITNCIVMGRAESMARHVSPIPAFLDGLGSGLGYGWVLVCISIIRELFGFGTILGFRVIPEILYASAAHPDGYENLGLMVLAPSAFFLLGIMIWIVNIIRAPKTKR.

6 helical membrane passes run 22–42 (LIAI…TTAL), 43–63 (TMGF…SLLR), 77–97 (IIIS…FFTI), 101–121 (LSVF…AESM), 131–151 (FLDG…ISII), and 183–203 (LGLM…IWIV).

Belongs to the NqrDE/RnfAE family. Composed of six subunits; NqrA, NqrB, NqrC, NqrD, NqrE and NqrF.

Its subcellular location is the cell inner membrane. The catalysed reaction is a ubiquinone + n Na(+)(in) + NADH + H(+) = a ubiquinol + n Na(+)(out) + NAD(+). In terms of biological role, NQR complex catalyzes the reduction of ubiquinone-1 to ubiquinol by two successive reactions, coupled with the transport of Na(+) ions from the cytoplasm to the periplasm. NqrA to NqrE are probably involved in the second step, the conversion of ubisemiquinone to ubiquinol. This chain is Na(+)-translocating NADH-quinone reductase subunit D, found in Chlamydia trachomatis serovar L2 (strain ATCC VR-902B / DSM 19102 / 434/Bu).